The following is a 316-amino-acid chain: UPF0324 membrane protein SO_4708 (316 aa).

9 helical membrane passes run 61–80, 85–107, 114–136, 146–168, 175–197, 207–226, 233–252, 262–281, and 293–315; these read LLSYSIIGLGFGINLTAAIE, NLGLIIGSIIFTLILGFIVTRAL, GHLIASGTAICGGSAIAAVAPAV, ALACVFVLNSVALFLFPALGHLL, FGVWSAIAIHDTSSVVGAASAYG, IKLARALWIIPIALVSALIF, LNLPYFIGFYCLAIAIAHWL, LFMVSKHTLVLCLFLIGAGI, and PLLLGVILWMAIGVTSLAYILYF.

It belongs to the UPF0324 family.

The protein resides in the cell membrane. The polypeptide is UPF0324 membrane protein SO_4708 (Shewanella oneidensis (strain ATCC 700550 / JCM 31522 / CIP 106686 / LMG 19005 / NCIMB 14063 / MR-1)).